Reading from the N-terminus, the 179-residue chain is Ribosome maturation factor RimM (179 aa).

Positions 102 to 175 (VEMWWDRDLV…RIVVDPPPGL (74 aa)) constitute a PRC barrel domain.

This sequence belongs to the RimM family. As to quaternary structure, binds ribosomal protein uS19.

It is found in the cytoplasm. An accessory protein needed during the final step in the assembly of 30S ribosomal subunit, possibly for assembly of the head region. Essential for efficient processing of 16S rRNA. May be needed both before and after RbfA during the maturation of 16S rRNA. It has affinity for free ribosomal 30S subunits but not for 70S ribosomes. This is Ribosome maturation factor RimM from Frankia casuarinae (strain DSM 45818 / CECT 9043 / HFP020203 / CcI3).